Here is a 1888-residue protein sequence, read N- to C-terminus: Protein mms22 (1888 aa).

Disordered regions lie at residues 12-34 (DSQD…RGNE), 151-258 (FSSD…ISSN), and 316-354 (RRKL…SRFD). Polar residues-rich tracts occupy residues 13 to 32 (SQDS…SQRG), 212 to 227 (SNLN…SSTI), and 338 to 348 (SDNSISTPTPT).

It belongs to the MMS22 family.

The protein resides in the nucleus. Functionally, involved in protection against replication-dependent DNA damage. May act by restoring active replication forks, repairing unusual DNA structures, and/or preventing aberrant DNA rearrangement at arrested replication forks. This is Protein mms22 (mus7) from Schizosaccharomyces pombe (strain 972 / ATCC 24843) (Fission yeast).